The primary structure comprises 430 residues: Aspartate aminotransferase, mitochondrial (430 aa).

Residues 1–28 (MALAMMIRNAASKRGMTPISGHFGGLRS) constitute a mitochondrion transit peptide. Gly-65, Trp-160, and Asn-213 together coordinate L-aspartate. Residue Lys-277 is modified to N6-(pyridoxal phosphate)lysine. Arg-405 provides a ligand contact to L-aspartate.

Belongs to the class-I pyridoxal-phosphate-dependent aminotransferase family. As to quaternary structure, homodimer. The cofactor is pyridoxal 5'-phosphate.

Its subcellular location is the mitochondrion matrix. The catalysed reaction is L-aspartate + 2-oxoglutarate = oxaloacetate + L-glutamate. Its function is as follows. Amino acid aminotransferase important for the metabolism of amino acids and Krebs-cycle related organic acids. No activity with D-Asp or D-Ala as amino donors. In plants, it is involved in nitrogen metabolism and in aspects of carbon and energy metabolism. This chain is Aspartate aminotransferase, mitochondrial (ASP1), found in Arabidopsis thaliana (Mouse-ear cress).